Here is a 418-residue protein sequence, read N- to C-terminus: Histidine--tRNA ligase (418 aa).

The protein belongs to the class-II aminoacyl-tRNA synthetase family. Homodimer.

The protein localises to the cytoplasm. The catalysed reaction is tRNA(His) + L-histidine + ATP = L-histidyl-tRNA(His) + AMP + diphosphate + H(+). This chain is Histidine--tRNA ligase, found in Dehalococcoides mccartyi (strain ATCC BAA-2266 / KCTC 15142 / 195) (Dehalococcoides ethenogenes (strain 195)).